Reading from the N-terminus, the 1197-residue chain is Probable DNA polymerase (1197 aa).

This sequence belongs to the DNA polymerase type-B family.

The protein localises to the mitochondrion. The catalysed reaction is DNA(n) + a 2'-deoxyribonucleoside 5'-triphosphate = DNA(n+1) + diphosphate. The polypeptide is Probable DNA polymerase (Podospora anserina (Pleurage anserina)).